A 312-amino-acid polypeptide reads, in one-letter code: Putative olfactory receptor 1F2 (312 aa).

The Extracellular portion of the chain corresponds to 1–25 (MERDKPVSVSEFLLLGLSRQPQQQH). Residues 26-49 (LLFVFFLSMYLATVLGNLLIILAI) form a helical membrane-spanning segment. At 50-57 (SIDSRLHT) the chain is on the cytoplasmic side. A helical transmembrane segment spans residues 58–78 (PMYFFLSNMSFVDNCFSTTVP). Residues 79–99 (KMLANHILRTQTISFSGCLMQ) are Extracellular-facing. An intrachain disulfide couples C96 to C188. The chain crosses the membrane as a helical span at residues 100-119 (MYFISELADMDNFLLAVMAY). Topologically, residues 120–138 (DRFVAVCRPLHYTAKMIHQ) are cytoplasmic. Residues 139 to 157 (LCALLVTGSWVVANSNALL) traverse the membrane as a helical segment. Topologically, residues 158–195 (HTLLMARLSFCADNTIPHIFCDVTPLLKLSCSDTHLSE) are extracellular. Residues 196-218 (VMILTEAALVTITPFLCLLASYM) traverse the membrane as a helical segment. The Cytoplasmic portion of the chain corresponds to 219–235 (HITCVVLRVPSTKGRWK). The chain crosses the membrane as a helical span at residues 236–258 (AFSTCGSHLAVVLLFYGTIMSPY). Topologically, residues 259 to 271 (FRTSSSHSAQRDI) are extracellular. Residues 272–291 (AAAVRFTVVTPVMNPLIYSL) form a helical membrane-spanning segment. The Cytoplasmic portion of the chain corresponds to 292–312 (RNKDIKGALVKVVAVKFFSVQ).

Belongs to the G-protein coupled receptor 1 family.

The protein localises to the cell membrane. Its function is as follows. Odorant receptor. This Homo sapiens (Human) protein is Putative olfactory receptor 1F2 (OR1F2P).